A 425-amino-acid chain; its full sequence is Serine hydroxymethyltransferase (425 aa).

(6S)-5,6,7,8-tetrahydrofolate contacts are provided by residues Leu123 and 127-129; that span reads GHL. Position 232 is an N6-(pyridoxal phosphate)lysine (Lys232). (6S)-5,6,7,8-tetrahydrofolate is bound at residue Glu248.

It belongs to the SHMT family. Homodimer. It depends on pyridoxal 5'-phosphate as a cofactor.

It is found in the cytoplasm. The enzyme catalyses (6R)-5,10-methylene-5,6,7,8-tetrahydrofolate + glycine + H2O = (6S)-5,6,7,8-tetrahydrofolate + L-serine. It participates in one-carbon metabolism; tetrahydrofolate interconversion. It functions in the pathway amino-acid biosynthesis; glycine biosynthesis; glycine from L-serine: step 1/1. In terms of biological role, catalyzes the reversible interconversion of serine and glycine with tetrahydrofolate (THF) serving as the one-carbon carrier. This reaction serves as the major source of one-carbon groups required for the biosynthesis of purines, thymidylate, methionine, and other important biomolecules. Also exhibits THF-independent aldolase activity toward beta-hydroxyamino acids, producing glycine and aldehydes, via a retro-aldol mechanism. The sequence is that of Serine hydroxymethyltransferase from Anaplasma phagocytophilum (strain HZ).